The sequence spans 413 residues: MPTWTEYIFYKKLGKAPSPGDVVEVVPDLVGFHDLTGYHVLEVLEQMGKVEVFDRGRVVVAFDHLAPPPTQRAAELQVYIRRHVKALGLPHFYDVGGGILHQIILEKYAMPEQVIFAADSHTNTAGAVGAFAQGLGATDIAAALKLGKTWLVVPTPFAVRVVGEFPKGVMGKDVALHLLGAFGAEGFNGYSVEVTVEKPKAFPMDDRATVANMSTEMGADALVFIPDEVTVAYLHEARGVSYKPPALGGGKYADEYTVELGRLEPLVAAPHSVDNVKAVAEVEGIEVDQVFIGSCTNGRLSDIEVAAKILRHGRVKARCIAIPASYDVFRRAMELGYVDVLTKAGCVVTYGTCGPCLGGHFGVAGPGEVVLTTSNRNFKGRVGHPDSKVYLANPAVAAATALTGRITDPRQYL.

Positions 295, 353, and 356 each coordinate [4Fe-4S] cluster.

Belongs to the aconitase/IPM isomerase family. LeuC type 2 subfamily. In terms of assembly, heterodimer of LeuC and LeuD. The cofactor is [4Fe-4S] cluster.

It catalyses the reaction (2R,3S)-3-isopropylmalate = (2S)-2-isopropylmalate. The protein operates within amino-acid biosynthesis; L-leucine biosynthesis; L-leucine from 3-methyl-2-oxobutanoate: step 2/4. Functionally, catalyzes the isomerization between 2-isopropylmalate and 3-isopropylmalate, via the formation of 2-isopropylmaleate. The sequence is that of 3-isopropylmalate dehydratase large subunit from Pyrobaculum calidifontis (strain DSM 21063 / JCM 11548 / VA1).